The sequence spans 159 residues: MDMEKLKRMQARGGVRTGDGKGTPRRKVKNVHKSTGMDDKKLQTSLKKLNVQPIQAIEEVNMFKSDGNVIHFAAPKVHAAVPSNTFAIYGNGEDKELTELVPGILNQLGPDSLASLRKLAESYQSMQKAEGGEEKKDDEEDDDDIPDLVEGENFEDKVE.

Disordered regions lie at residues 1-39 and 124-159; these read MDMEKLKRMQARGGVRTGDGKGTPRRKVKNVHKSTGMDD and QSMQKAEGGEEKKDDEEDDDDIPDLVEGENFEDKVE. The span at 23–32 shows a compositional bias: basic residues; the sequence is TPRRKVKNVH. The region spanning 36 to 101 is the NAC-A/B domain; that stretch reads GMDDKKLQTS…GEDKELTELV (66 aa). Positions 136–153 are enriched in acidic residues; it reads KDDEEDDDDIPDLVEGEN.

The protein belongs to the NAC-beta family. In terms of assembly, part of the nascent polypeptide-associated complex (NAC), consisting of EGD2 and EGD1. NAC associates with ribosomes via EGD1.

It localises to the cytoplasm. Its subcellular location is the nucleus. Its function is as follows. Component of the nascent polypeptide-associated complex (NAC), a dynamic component of the ribosomal exit tunnel, protecting the emerging polypeptides from interaction with other cytoplasmic proteins to ensure appropriate nascent protein targeting. The NAC complex also promotes mitochondrial protein import by enhancing productive ribosome interactions with the outer mitochondrial membrane and blocks the inappropriate interaction of ribosomes translating non-secretory nascent polypeptides with translocation sites in the membrane of the endoplasmic reticulum. EGD1 may act as a transcription factor that exert a negative effect on the expression of several genes that are transcribed by RNA polymerase II. This is Nascent polypeptide-associated complex subunit beta (egd1) from Sclerotinia sclerotiorum (strain ATCC 18683 / 1980 / Ss-1) (White mold).